Here is a 146-residue protein sequence, read N- to C-terminus: Large ribosomal subunit protein uL15 (146 aa).

The interval 1–51 (MQLNTIKPAEGSKKNRRHVGRGIGSGLGKTAGRGHKGQKSRSGGFHKVGFE) is disordered. Residues 21–31 (RGIGSGLGKTA) are compositionally biased toward gly residues.

Belongs to the universal ribosomal protein uL15 family. Part of the 50S ribosomal subunit.

Binds to the 23S rRNA. This Polynucleobacter necessarius subsp. necessarius (strain STIR1) protein is Large ribosomal subunit protein uL15.